A 68-amino-acid chain; its full sequence is Alpha-conotoxin-like Lp1.2 (68 aa).

Residues 1–21 (MGMRMMFTVFLLVVLATTVVS) form the signal peptide. A propeptide spanning residues 22–48 (FTSDRAFDGRNAAASDKASDLISLAVR) is cleaved from the precursor. 2 disulfides stabilise this stretch: Cys50/Cys56 and Cys51/Cys64. The interval 52-54 (SHP) is ser-Xaa-Pro motif, crucial for potent interaction with nAChR. The residue at position 64 (Cys64) is a Cysteine amide. A propeptide spanning residues 65–68 (GGKR) is cleaved from the precursor.

Belongs to the conotoxin A superfamily. In terms of tissue distribution, expressed by the venom duct.

The protein resides in the secreted. Alpha-conotoxins act on postsynaptic membranes, they bind to the nicotinic acetylcholine receptors (nAChR) and thus inhibit them. The polypeptide is Alpha-conotoxin-like Lp1.2 (Conus leopardus (Leopard cone)).